A 190-amino-acid chain; its full sequence is Zinc finger C2H2 protein ECU03_0790 (190 aa).

C2H2-type zinc fingers lie at residues 4–27 (RCCF…LNTH), 33–55 (YKCD…KKKH), 85–108 (YKCG…ESHH), and 119–142 (HVCE…RSVH).

The chain is Zinc finger C2H2 protein ECU03_0790 from Encephalitozoon cuniculi (strain GB-M1) (Microsporidian parasite).